A 212-amino-acid chain; its full sequence is ER lumen protein-retaining receptor 1-A (212 aa).

The Lumenal segment spans residues 1 to 4; that stretch reads MNIF. The chain crosses the membrane as a helical span at residues 5-24; the sequence is RFLGDISHLSAIFILLLKIW. Over 25–32 the chain is Cytoplasmic; that stretch reads KSRSCAGI. A helical transmembrane segment spans residues 33-52; sequence SGKSQLLFAIVFTARYLDLF. Residues 47-48 are interaction with the K-D-E-L motif on target proteins; sequence RY. Residues 53–58 are Lumenal-facing; sequence TNYISF. A helical transmembrane segment spans residues 59–79; it reads YNTSMKVVYVASSYATVWMIY. Residues 80–92 lie on the Cytoplasmic side of the membrane; that stretch reads SKFKATYDGNHDT. Residues 93-110 form a helical membrane-spanning segment; that stretch reads FRVEFLIVPTAILAFLVN. At 111-116 the chain is on the lumenal side; it reads HDFTPL. Residues 117 to 135 form a helical membrane-spanning segment; sequence EIFWTFSIYLESVAILPQL. Over 136–149 the chain is Cytoplasmic; that stretch reads FMVSKTGEAETITS. The chain crosses the membrane as a helical span at residues 150–168; it reads HYLFALGIYRTLYLFNWIW. The tract at residues 159–169 is interaction with the K-D-E-L motif on target proteins; it reads RTLYLFNWIWR. Over 169 to 178 the chain is Lumenal; that stretch reads RYQFEGFFDL. Residues 179–199 form a helical membrane-spanning segment; sequence IAIVAGLVQTVLYCDFFYLYV. Over 200–212 the chain is Cytoplasmic; the sequence is TKVLKGKKLSLPA. Positions 204–207 are important for recycling of cargo proteins with the sequence motif K-D-E-L from the Golgi to the endoplasmic reticulum; that stretch reads KGKK.

The protein belongs to the ERD2 family.

It localises to the golgi apparatus membrane. The protein resides in the cytoplasmic vesicle. Its subcellular location is the COPI-coated vesicle membrane. It is found in the endoplasmic reticulum membrane. The protein localises to the endoplasmic reticulum-Golgi intermediate compartment membrane. Receptor for the C-terminal sequence motif K-D-E-L that is present on endoplasmic reticulum resident proteins and that mediates their recycling from the Golgi back to the endoplasmic reticulum. The chain is ER lumen protein-retaining receptor 1-A (kdelr1-a) from Xenopus laevis (African clawed frog).